Here is a 260-residue protein sequence, read N- to C-terminus: Triosephosphate isomerase (260 aa).

Residue 11-13 (NWK) participates in substrate binding. H103 (electrophile) is an active-site residue. E175 functions as the Proton acceptor in the catalytic mechanism. Residues G181, S220, and 241-242 (GG) each bind substrate.

It belongs to the triosephosphate isomerase family. Homodimer.

The protein localises to the cytoplasm. It catalyses the reaction D-glyceraldehyde 3-phosphate = dihydroxyacetone phosphate. It functions in the pathway carbohydrate biosynthesis; gluconeogenesis. Its pathway is carbohydrate degradation; glycolysis; D-glyceraldehyde 3-phosphate from glycerone phosphate: step 1/1. Involved in the gluconeogenesis. Catalyzes stereospecifically the conversion of dihydroxyacetone phosphate (DHAP) to D-glyceraldehyde-3-phosphate (G3P). This chain is Triosephosphate isomerase, found in Shewanella denitrificans (strain OS217 / ATCC BAA-1090 / DSM 15013).